Here is a 136-residue protein sequence, read N- to C-terminus: uncharacterized protein (136 aa).

To E.coli YcgX and YdfO.

This is an uncharacterized protein from Escherichia coli (strain K12).